The chain runs to 380 residues: Probable protein phosphatase 2C 27 (380 aa).

The 261-residue stretch at 84-344 (RSGSCAEQGA…DNLTVIVVCF (261 aa)) folds into the PPM-type phosphatase domain. Residues aspartate 128, glycine 129, aspartate 292, and aspartate 335 each coordinate Mn(2+).

Belongs to the PP2C family. Mg(2+) serves as cofactor. It depends on Mn(2+) as a cofactor. As to expression, expressed in roots, leaves, stems, flower, and trichomes.

The protein resides in the nucleus. It localises to the cytoplasm. The catalysed reaction is O-phospho-L-seryl-[protein] + H2O = L-seryl-[protein] + phosphate. The enzyme catalyses O-phospho-L-threonyl-[protein] + H2O = L-threonyl-[protein] + phosphate. In terms of biological role, confers salt tolerance by triggering the expression of stress-responsive genes. The sequence is that of Probable protein phosphatase 2C 27 from Arabidopsis thaliana (Mouse-ear cress).